The primary structure comprises 35 residues: UPF0387 membrane protein YohO (35 aa).

Residues 6 to 26 (IGVIALFLFMALGGIGGVMLA) traverse the membrane as a helical segment.

The protein belongs to the UPF0387 family.

The protein resides in the cell inner membrane. The chain is UPF0387 membrane protein YohO from Shigella boydii serotype 4 (strain Sb227).